We begin with the raw amino-acid sequence, 300 residues long: Haloalkane dehalogenase (300 aa).

The region spanning 32–155 (AIVFQHGNPT…PAVRGVFQGF (124 aa)) is the AB hydrolase-1 domain. Catalysis depends on aspartate 109, which acts as the Nucleophile. Glutamate 133 serves as the catalytic Proton donor. Histidine 273 acts as the Proton acceptor in catalysis.

The protein belongs to the haloalkane dehalogenase family. Type 2 subfamily. Monomer.

The enzyme catalyses 1-haloalkane + H2O = a halide anion + a primary alcohol + H(+). Catalyzes hydrolytic cleavage of carbon-halogen bonds in halogenated aliphatic compounds, leading to the formation of the corresponding primary alcohols, halide ions and protons. This is Haloalkane dehalogenase from Mycobacterium bovis (strain BCG / Pasteur 1173P2).